Here is a 208-residue protein sequence, read N- to C-terminus: Outer-membrane lipoprotein carrier protein (208 aa).

An N-terminal signal peptide occupies residues 1 to 25 (MKKRFSAKLFSALVLSISFFSAANA).

It belongs to the LolA family. As to quaternary structure, monomer.

The protein localises to the periplasm. Its function is as follows. Participates in the translocation of lipoproteins from the inner membrane to the outer membrane. Only forms a complex with a lipoprotein if the residue after the N-terminal Cys is not an aspartate (The Asp acts as a targeting signal to indicate that the lipoprotein should stay in the inner membrane). This chain is Outer-membrane lipoprotein carrier protein, found in Vibrio parahaemolyticus serotype O3:K6 (strain RIMD 2210633).